The sequence spans 1240 residues: DNA excision repair protein ERCC-6-like (1240 aa).

A Phosphoserine modification is found at Ser-14. One copy of the TPR 1 repeat lies at Tyr-21–Lys-54. A Helicase ATP-binding domain is found at Ser-110–Gly-278. ATP is bound at residue Asp-123–Thr-130. Residues Asp-229–His-232 carry the DEAH box motif. Residues Phe-467–Phe-631 form the Helicase C-terminal domain. The disordered stretch occupies residues Phe-736–Lys-760. Residues Asn-748–Lys-760 show a composition bias toward polar residues. Ser-755 and Ser-773 each carry phosphoserine. A disordered region spans residues Asp-778 to Ala-813. The segment covering Thr-795–Ala-809 has biased composition (polar residues). Ser-821 carries the post-translational modification Phosphoserine. The disordered stretch occupies residues Gln-845 to Pro-879. 4 positions are modified to phosphoserine: Ser-966, Ser-998, Ser-1001, and Ser-1021. Positions Lys-974–Arg-1085 are disordered. Residues Leu-978–Ser-998 show a composition bias toward polar residues. Residues Ser-1049 to Ser-1065 show a composition bias toward polar residues. At Thr-1057 the chain carries Phosphothreonine. Residues Ser-1092 and Ser-1112 each carry the phosphoserine modification. Positions Met-1104–Glu-1117 are enriched in acidic residues. The tract at residues Met-1104 to Val-1185 is disordered. Over residues Glu-1135–Pro-1165 the composition is skewed to polar residues. Phosphoserine is present on Ser-1172. The stretch at Tyr-1191 to Asp-1224 is one TPR 2 repeat.

It belongs to the SNF2/RAD54 helicase family. In terms of assembly, interacts with PLK1, which phosphorylates it. Both proteins are mutually dependent on each other for correct subcellular localization. Interacts (via N-terminal TPR repeat) with BEND3 (via BEN domains 1 and 3); the interaction is direct. Post-translationally, phosphorylation by PLK1 prevents the association with chromosome arms and restricts its localization to the kinetochore-centromere region. In terms of tissue distribution, expressed mainly in the neural tube and heart of 10.5 dpc embryo. Significantly down-regulated after alcohol exposure in embryonic brain and heart, but not in embryonic kidney, liver, or lung.

It is found in the chromosome. Its subcellular location is the centromere. The protein localises to the kinetochore. It carries out the reaction ATP + H2O = ADP + phosphate + H(+). Functionally, DNA helicase that acts as a tension sensor that associates with catenated DNA which is stretched under tension until it is resolved during anaphase. Functions as ATP-dependent DNA translocase. Can promote Holliday junction branch migration (in vitro). The protein is DNA excision repair protein ERCC-6-like (Ercc6l) of Mus musculus (Mouse).